The primary structure comprises 111 residues: MFSRVMFCTFLILPLLAAATAIPRTDTPSCSTGSLQCCSSVQKASDPLVGIIVALLGIVLGPLDLNVGLTCSPITVIGVGGTSCTQQTVCCTGNNFDGLIVAGCSPINIGL.

The first 21 residues, Met-1–Ala-21, serve as a signal peptide directing secretion. Disulfide bonds link Cys-30–Cys-90, Cys-37–Cys-84, Cys-38–Cys-71, and Cys-91–Cys-104.

It belongs to the fungal hydrophobin family. In terms of assembly, self-assembles to form functional amyloid fibrils called rodlets. Self-assembly into fibrillar rodlets occurs spontaneously at hydrophobic:hydrophilic interfaces and the rodlets further associate laterally to form amphipathic monolayers. Behavior depends on environmental conditions: (1) when the pH increases or in the presence of Ca(2+) ions, an assembled state, beta-sheet rich, is formed; (2) when the solvent polarity increases, the vhm2 shows an increased tendency to reach hydrophobic/hydrophilic interfaces, with no detectable conformational change; and (3) at high temperature, a reversible conformational change and reversible aggregation occur. The physical and chemical properties, both in solution and as a biofilm, are affected by polysaccharides that act as hydrophilic stabilizer.

Its subcellular location is the secreted. The protein localises to the cell wall. In terms of biological role, aerial growth, conidiation, and dispersal of filamentous fungi in the environment rely upon a capability of their secreting small amphipathic proteins called hydrophobins (HPBs) with low sequence identity. Class I can self-assemble into an outermost layer of rodlet bundles on aerial cell surfaces, conferring cellular hydrophobicity that supports fungal growth, development and dispersal; whereas Class II form highly ordered films at water-air interfaces through intermolecular interactions but contribute nothing to the rodlet structure. Vmh2 is a class I hydrophobin involved in biofilm formation and is essential for the maintenance of the surface hydrophobicity of the mycelium. Seems not to be involved in hyphal resistance against environmental stress. This chain is Class I hydrophobin 2, found in Pleurotus ostreatus (strain PC15) (Oyster mushroom).